Here is a 326-residue protein sequence, read N- to C-terminus: Virulence-associated V antigen (326 aa).

The protein resides in the secreted. In terms of biological role, possibly involved in calcium regulation of YOP expression, which includes the export process. The sequence is that of Virulence-associated V antigen (lcrV) from Yersinia pestis.